The chain runs to 256 residues: Thiazole synthase (256 aa).

Residue Lys-95 is the Schiff-base intermediate with DXP of the active site. 1-deoxy-D-xylulose 5-phosphate-binding positions include Gly-156, 182-183 (AG), and 204-205 (NT).

It belongs to the ThiG family. In terms of assembly, homotetramer. Forms heterodimers with either ThiH or ThiS.

The protein resides in the cytoplasm. It catalyses the reaction [ThiS sulfur-carrier protein]-C-terminal-Gly-aminoethanethioate + 2-iminoacetate + 1-deoxy-D-xylulose 5-phosphate = [ThiS sulfur-carrier protein]-C-terminal Gly-Gly + 2-[(2R,5Z)-2-carboxy-4-methylthiazol-5(2H)-ylidene]ethyl phosphate + 2 H2O + H(+). Its pathway is cofactor biosynthesis; thiamine diphosphate biosynthesis. Its function is as follows. Catalyzes the rearrangement of 1-deoxy-D-xylulose 5-phosphate (DXP) to produce the thiazole phosphate moiety of thiamine. Sulfur is provided by the thiocarboxylate moiety of the carrier protein ThiS. In vitro, sulfur can be provided by H(2)S. This Salmonella choleraesuis (strain SC-B67) protein is Thiazole synthase.